The primary structure comprises 251 residues: Ubiquinone/menaquinone biosynthesis C-methyltransferase UbiE (251 aa).

S-adenosyl-L-methionine is bound by residues Thr-74, Asp-95, and 123–124; that span reads NA.

This sequence belongs to the class I-like SAM-binding methyltransferase superfamily. MenG/UbiE family.

The catalysed reaction is a 2-demethylmenaquinol + S-adenosyl-L-methionine = a menaquinol + S-adenosyl-L-homocysteine + H(+). It catalyses the reaction a 2-methoxy-6-(all-trans-polyprenyl)benzene-1,4-diol + S-adenosyl-L-methionine = a 5-methoxy-2-methyl-3-(all-trans-polyprenyl)benzene-1,4-diol + S-adenosyl-L-homocysteine + H(+). It participates in quinol/quinone metabolism; menaquinone biosynthesis; menaquinol from 1,4-dihydroxy-2-naphthoate: step 2/2. Its pathway is cofactor biosynthesis; ubiquinone biosynthesis. In terms of biological role, methyltransferase required for the conversion of demethylmenaquinol (DMKH2) to menaquinol (MKH2) and the conversion of 2-polyprenyl-6-methoxy-1,4-benzoquinol (DDMQH2) to 2-polyprenyl-3-methyl-6-methoxy-1,4-benzoquinol (DMQH2). This is Ubiquinone/menaquinone biosynthesis C-methyltransferase UbiE from Shewanella sediminis (strain HAW-EB3).